Reading from the N-terminus, the 176-residue chain is Ribosome rescue factor SmrB (176 aa).

Positions 98–173 constitute a Smr domain; it reads LDLHGLTQKQ…GTAALLVLVE (76 aa).

Belongs to the SmrB family. As to quaternary structure, associates with collided ribosomes, but not with correctly translating polysomes.

Functionally, acts as a ribosome collision sensor. Detects stalled/collided disomes (pairs of ribosomes where the leading ribosome is stalled and a second ribosome has collided with it) and endonucleolytically cleaves mRNA at the 5' boundary of the stalled ribosome. Stalled/collided disomes form a new interface (primarily via the 30S subunits) that binds SmrB. Cleaved mRNA becomes available for tmRNA ligation, leading to ribosomal subunit dissociation and rescue of stalled ribosomes. This is Ribosome rescue factor SmrB from Yersinia enterocolitica serotype O:8 / biotype 1B (strain NCTC 13174 / 8081).